The chain runs to 334 residues: Glycerol-1-phosphate dehydrogenase [NAD(P)+] (334 aa).

NAD(+)-binding positions include 77 to 81 (GRPID) and 99 to 102 (TTAS). Asp-104 contacts substrate. Ser-108 lines the NAD(+) pocket. Asp-147 provides a ligand contact to substrate. The Zn(2+) site is built by Asp-147 and His-225. His-229 contributes to the substrate binding site. Residue His-246 coordinates Zn(2+).

Belongs to the glycerol-1-phosphate dehydrogenase family. It depends on Zn(2+) as a cofactor.

It is found in the cytoplasm. The catalysed reaction is sn-glycerol 1-phosphate + NAD(+) = dihydroxyacetone phosphate + NADH + H(+). It carries out the reaction sn-glycerol 1-phosphate + NADP(+) = dihydroxyacetone phosphate + NADPH + H(+). It functions in the pathway membrane lipid metabolism; glycerophospholipid metabolism. Catalyzes the NAD(P)H-dependent reduction of dihydroxyacetonephosphate (DHAP or glycerone phosphate) to glycerol 1-phosphate (G1P). The G1P thus generated is used as the glycerophosphate backbone of phospholipids in the cellular membranes of Archaea. In Methanococcus maripaludis (strain C6 / ATCC BAA-1332), this protein is Glycerol-1-phosphate dehydrogenase [NAD(P)+].